Consider the following 219-residue polypeptide: Orotidine 5'-phosphate decarboxylase (219 aa).

Substrate is bound by residues Asp10, Lys32, Asp58 to Thr67, Ser113, Pro163 to Tyr173, Gly186, and Arg187. The Proton donor role is filled by Lys60.

This sequence belongs to the OMP decarboxylase family. Type 1 subfamily. Homodimer.

It catalyses the reaction orotidine 5'-phosphate + H(+) = UMP + CO2. Its pathway is pyrimidine metabolism; UMP biosynthesis via de novo pathway; UMP from orotate: step 2/2. Functionally, catalyzes the decarboxylation of orotidine 5'-monophosphate (OMP) to uridine 5'-monophosphate (UMP). The polypeptide is Orotidine 5'-phosphate decarboxylase (Thermoplasma volcanium (strain ATCC 51530 / DSM 4299 / JCM 9571 / NBRC 15438 / GSS1)).